A 440-amino-acid polypeptide reads, in one-letter code: Beta-1,3-galactosyl-O-glycosyl-glycoprotein beta-1,6-N-acetylglucosaminyltransferase (440 aa).

Over 1–9 the chain is Cytoplasmic; the sequence is MKMAGWKKK. A helical; Signal-anchor for type II membrane protein membrane pass occupies residues 10–30; sequence LCPGHHLWALGCYMLLAVVSL. The Lumenal portion of the chain corresponds to 31–440; the sequence is RLSLRFKCDV…RHKAIYGTEL (410 aa). N-linked (GlcNAc...) asparagine; by host glycosylation is found at Asn-72 and Asn-108. 4 disulfide bridges follow: Cys-73-Cys-230, Cys-164-Cys-384, Cys-185-Cys-212, and Cys-393-Cys-425.

It belongs to the glycosyltransferase 14 family.

The protein localises to the host Golgi apparatus membrane. It catalyses the reaction a 3-O-[beta-D-galactosyl-(1-&gt;3)-N-acetyl-alpha-D-galactosaminyl]-L-seryl-[protein] + UDP-N-acetyl-alpha-D-glucosamine = 3-O-{beta-D-galactosyl-(1-&gt;3)-[N-acetyl-beta-D-glucosaminyl-(1-&gt;6)]-N-acetyl-alpha-D-galactosaminyl}-L-seryl-[protein] + UDP + H(+). It carries out the reaction a 3-O-[beta-D-galactosyl-(1-&gt;3)-N-acetyl-alpha-D-galactosaminyl]-L-threonyl-[protein] + UDP-N-acetyl-alpha-D-glucosamine = a 3-O-{beta-D-galactosyl-(1-&gt;3)-[N-acetyl-beta-D-glucosaminyl-(1-&gt;6)]-N-acetyl-alpha-D-galactosaminyl}-L-threonyl-[protein] + UDP + H(+). The enzyme catalyses a beta-D-Gal-(1-&gt;4)-beta-D-GlcNAc-(1-&gt;3)-beta-D-Gal-(1-&gt;4)-beta-D-GlcNAc derivative + UDP-N-acetyl-alpha-D-glucosamine = a beta-D-Gal-(1-&gt;4)-beta-D-GlcNAc-(1-&gt;3)-[beta-D-GlcNAc-(1-&gt;6)]-beta-D-Gal-(1-&gt;4)-N-acetyl-beta-D-glucosaminyl derivative + UDP + H(+). The catalysed reaction is 3-O-[N-acetyl-beta-D-glucosaminyl-(1-&gt;3)-N-acetyl-alpha-D-galactosaminyl]-L-seryl-[protein] + UDP-N-acetyl-alpha-D-glucosamine = 3-O-[N-acetyl-beta-D-glucosaminyl-(1-&gt;3)-[N-acetyl-beta-D-glucosaminyl-(1-&gt;6)]-N-acetyl-alpha-D-galactosaminyl]-L-seryl-[protein] + UDP + H(+). It catalyses the reaction a 3-O-[N-acetyl-beta-D-glucosaminyl-(1-&gt;3)-N-acetyl-alpha-D-galactosaminyl]-L-threonyl-[protein] + UDP-N-acetyl-alpha-D-glucosamine = 3-O-[N-acetyl-beta-D-glucosaminyl-(1-&gt;3)-[N-acetyl-beta-D-glucosaminyl-(1-&gt;6)]-N-acetyl-alpha-D-galactosaminyl]-L-threonyl-[protein] + UDP + H(+). It participates in protein modification; protein glycosylation. Its function is as follows. Non-essential glycosyltransferase that can synthesize all known mucin beta 6 N-acetylglucosaminides. Mediates core 2 and core 4 O-glycan branching, 2 important steps in mucin-type biosynthesis. Has also I-branching enzyme activity by converting linear into branched poly-N-acetyllactosaminoglycans. Contributes to the post-translational modifications of structural proteins. The chain is Beta-1,3-galactosyl-O-glycosyl-glycoprotein beta-1,6-N-acetylglucosaminyltransferase (Bo17) from Bovine herpesvirus 4 (strain LVR140) (BoHV-4).